Consider the following 277-residue polypeptide: Large ribosomal subunit protein uL2 (277 aa).

Disordered stretches follow at residues 24–55 (ITTS…RHHG) and 221–277 (RGSV…RKKK).

It belongs to the universal ribosomal protein uL2 family. As to quaternary structure, part of the 50S ribosomal subunit. Forms a bridge to the 30S subunit in the 70S ribosome.

In terms of biological role, one of the primary rRNA binding proteins. Required for association of the 30S and 50S subunits to form the 70S ribosome, for tRNA binding and peptide bond formation. It has been suggested to have peptidyltransferase activity; this is somewhat controversial. Makes several contacts with the 16S rRNA in the 70S ribosome. The protein is Large ribosomal subunit protein uL2 of Listeria welshimeri serovar 6b (strain ATCC 35897 / DSM 20650 / CCUG 15529 / CIP 8149 / NCTC 11857 / SLCC 5334 / V8).